Consider the following 646-residue polypeptide: MNTLLSIGRSIITSAPRIVSARQTTVTARTMATVSTINMPRDPNTLSNYNNWRTKHTIADLAIDFTKQRVHGTVTLQLESITDKESEEIILDTSFVDVQSVAVDGNKTGEWTLEKRIEPFGTPLSVKIPGGAAKGTVIALAITLSTTDKCTALQWLTPAQTSNKKFPYMFSQCQAIHNRSIFPCQDTPDVKSTYDFRIRSPLPVLASGLPRGAGSFVHGENGESGTLLYSFYQEIPMPSYLFALASGDIATASIGPRSLVSTGPEELIGAKWELERDTEKFIETIEKIVYPYEWTQYNVLVLPPSFPYGGMENPVFTFATPTIISGDRENVDVVAHELAHSWSGNLVSNASWEHFWLNEGWTVYLERRIIAAVHGEAYRDFSSIIGWKALEDSVKLYGEDHEFTKLIVDLKGKDPDDAFSSVPYEKGFHFLYYLERLVGKPSWDKFIPHYFTTWKKKSLDSYDFKATLLDFFASDSAASKALESVDWDSWFYKPGLPSKPEFDTSLVDKCYALAKKWESKDYTPSPSDIEGWAANQVVVFLQQVQLFTTPLTPVQSQAMGKAYNLVNTKNVELSSRYFGVGLAAKDETVYQPTAELLGKVGRMKFVRTLYRKLVVVDRKLAVETFEKNKDFYHPICRDQVEKDLKE.

A peptide is bound by residues 172–174 and 307–312; these read QCQ and PYGGME. H336 serves as a coordination point for Zn(2+). The Proton acceptor role is filled by E337. H340 and E359 together coordinate Zn(2+). Y424 (proton donor) is an active-site residue.

Belongs to the peptidase M1 family. Zn(2+) serves as cofactor.

The protein localises to the cytoplasm. It is found in the nucleus. The catalysed reaction is leukotriene A4 + H2O = leukotriene B4. Its pathway is lipid metabolism; leukotriene B4 biosynthesis. In terms of biological role, aminopeptidase that preferentially cleaves tripeptides. Also has low epoxide hydrolase activity (in vitro). Can hydrolyze an epoxide moiety of LTA(4) to form LTB(4) (in vitro). The protein is Leukotriene A-4 hydrolase homolog of Botryotinia fuckeliana (strain B05.10) (Noble rot fungus).